Reading from the N-terminus, the 96-residue chain is Venom protein 3.1 (96 aa).

The first 25 residues, 1-25, serve as a signal peptide directing secretion; sequence MKFSLISVFLFAVFLSNENIFQAIA. The tract at residues 45–84 is disordered; that stretch reads EAVMSSSLTNEEESRNWPHRATRNTLEKGQKRSPAARSEI.

This sequence belongs to the non-disulfide-bridged peptide (NDBP) superfamily. In terms of tissue distribution, expressed by the venom gland.

The protein localises to the secreted. In Lychas mucronatus (Chinese swimming scorpion), this protein is Venom protein 3.1.